Here is an 878-residue protein sequence, read N- to C-terminus: Alanine--tRNA ligase (878 aa).

Residues His-568, His-572, Cys-669, and His-673 each contribute to the Zn(2+) site.

It belongs to the class-II aminoacyl-tRNA synthetase family. Zn(2+) serves as cofactor.

It is found in the cytoplasm. It catalyses the reaction tRNA(Ala) + L-alanine + ATP = L-alanyl-tRNA(Ala) + AMP + diphosphate. Its function is as follows. Catalyzes the attachment of alanine to tRNA(Ala) in a two-step reaction: alanine is first activated by ATP to form Ala-AMP and then transferred to the acceptor end of tRNA(Ala). Also edits incorrectly charged Ser-tRNA(Ala) and Gly-tRNA(Ala) via its editing domain. In Polaromonas sp. (strain JS666 / ATCC BAA-500), this protein is Alanine--tRNA ligase.